Here is a 331-residue protein sequence, read N- to C-terminus: Lipoyl synthase (331 aa).

Positions 1–14 (MSTQLDASQPSNDV) are enriched in polar residues. The disordered stretch occupies residues 1-32 (MSTQLDASQPSNDVASPAAYDPTQKQKSQAKT). Residues C78, C83, C89, C104, C108, C111, and S318 each coordinate [4Fe-4S] cluster. One can recognise a Radical SAM core domain in the interval 89 to 307 (CFGKGTATFM…EREAYAMGFS (219 aa)).

The protein belongs to the radical SAM superfamily. Lipoyl synthase family. The cofactor is [4Fe-4S] cluster.

It localises to the cytoplasm. The catalysed reaction is [[Fe-S] cluster scaffold protein carrying a second [4Fe-4S](2+) cluster] + N(6)-octanoyl-L-lysyl-[protein] + 2 oxidized [2Fe-2S]-[ferredoxin] + 2 S-adenosyl-L-methionine + 4 H(+) = [[Fe-S] cluster scaffold protein] + N(6)-[(R)-dihydrolipoyl]-L-lysyl-[protein] + 4 Fe(3+) + 2 hydrogen sulfide + 2 5'-deoxyadenosine + 2 L-methionine + 2 reduced [2Fe-2S]-[ferredoxin]. It functions in the pathway protein modification; protein lipoylation via endogenous pathway; protein N(6)-(lipoyl)lysine from octanoyl-[acyl-carrier-protein]: step 2/2. In terms of biological role, catalyzes the radical-mediated insertion of two sulfur atoms into the C-6 and C-8 positions of the octanoyl moiety bound to the lipoyl domains of lipoate-dependent enzymes, thereby converting the octanoylated domains into lipoylated derivatives. The chain is Lipoyl synthase from Bordetella avium (strain 197N).